The sequence spans 184 residues: MNKDNLIENYAVALFNNAMVDNIQDKIFEEITAINRIIIDNFDIREFLFSPIVNKDDKINVVNSLVKNTKFNKIVNNFLLLLVKNSRTAILSNIVDAYNTLLYESKNIKIVQVISANKLQPKEQEWIKSRIEKELNQKTEILFDIDSTIIGGIIIKYDSMLQDYSIKGSLDKITKALKKVRIAA.

It belongs to the ATPase delta chain family. In terms of assembly, F-type ATPases have 2 components, F(1) - the catalytic core - and F(0) - the membrane proton channel. F(1) has five subunits: alpha(3), beta(3), gamma(1), delta(1), epsilon(1). F(0) has three main subunits: a(1), b(2) and c(10-14). The alpha and beta chains form an alternating ring which encloses part of the gamma chain. F(1) is attached to F(0) by a central stalk formed by the gamma and epsilon chains, while a peripheral stalk is formed by the delta and b chains.

It is found in the cell inner membrane. Functionally, f(1)F(0) ATP synthase produces ATP from ADP in the presence of a proton or sodium gradient. F-type ATPases consist of two structural domains, F(1) containing the extramembraneous catalytic core and F(0) containing the membrane proton channel, linked together by a central stalk and a peripheral stalk. During catalysis, ATP synthesis in the catalytic domain of F(1) is coupled via a rotary mechanism of the central stalk subunits to proton translocation. In terms of biological role, this protein is part of the stalk that links CF(0) to CF(1). It either transmits conformational changes from CF(0) to CF(1) or is implicated in proton conduction. This is ATP synthase subunit delta from Rickettsia felis (strain ATCC VR-1525 / URRWXCal2) (Rickettsia azadi).